Here is an 867-residue protein sequence, read N- to C-terminus: Cadherin-related family member 1 (867 aa).

The N-terminal stretch at M1–A21 is a signal peptide. At N22–K701 the chain is on the extracellular side. 6 Cadherin domains span residues N36–F135, I136–F247, V248–F354, P360–F473, T474–F577, and Y574–A689. N58 and N89 each carry an N-linked (GlcNAc...) asparagine glycan. 2 N-linked (GlcNAc...) asparagine glycosylation sites follow: N288 and N297. Residues A702–T722 traverse the membrane as a helical segment. Residues A723 to F867 lie on the Cytoplasmic side of the membrane. The interval K767–P843 is disordered. Residues E777–S786 are compositionally biased toward polar residues. Over residues P790 to A802 the composition is skewed to pro residues.

As to quaternary structure, interacts with PROM1. In terms of processing, undergoes proteolytic cleavage; produces a soluble 95 kDa N-terminal fragment and a 25 kDa cell-associated C-terminal fragment. Expressed in photoreceptor cells of the outer nuclear layer of the retina.

It localises to the cell membrane. Its function is as follows. Potential calcium-dependent cell-adhesion protein. May be required for the structural integrity of the outer segment (OS) of photoreceptor cells. The polypeptide is Cadherin-related family member 1 (CDHR1) (Bos taurus (Bovine)).